Reading from the N-terminus, the 140-residue chain is uncharacterized protein (140 aa).

The span at 1 to 19 (MGLCGSKTQPMPSQTTTVA) shows a compositional bias: polar residues. The segment at 1–140 (MGLCGSKTQP…ERERENMIYD (140 aa)) is disordered. The N-myristoyl glycine moiety is linked to residue Gly-2. Cys-4 carries S-palmitoyl cysteine lipidation. Basic and acidic residues predominate over residues 27-40 (INRDTVKSKQELRH). The segment covering 41 to 51 (KEKKDKKKKTQ) has biased composition (basic residues). A compositionally biased stretch (basic and acidic residues) spans 73 to 140 (DPSKNKVSPK…ERERENMIYD (68 aa)).

This sequence to S.pombe new13. Myristoylated. Post-translationally, the N-myristoylated protein is further palmitoylated by ERF2, PFA4 and slightly by PFA5, but not by PFA3.

It is found in the cytoplasm. Its subcellular location is the cytosol. This is an uncharacterized protein from Saccharomyces cerevisiae (strain ATCC 204508 / S288c) (Baker's yeast).